An 82-amino-acid chain; its full sequence is Opistoporin-1 (82 aa).

Residues 1–22 (MNRKLLFVTLMVTMLVMQPSEG) form the signal peptide. Positions 67–82 (EAGQMPFDEFMDILYE) are excised as a propeptide.

In terms of tissue distribution, expressed by the venom gland.

Its subcellular location is the secreted. It is found in the target cell membrane. Its function is as follows. At high concentrations, acts as a pore former in cellular membranes and causes the leakage of the cells. At submicromolar concentrations, degranulates granulocytes and has a weak hemolytic activity against human erythrocytes. Also strongly inhibits the production of superoxide anions. Has a strong antibacterial activity against Gram-negative bacteria but is less active against Gram-positive bacteria. Also has antifungal activity. This chain is Opistoporin-1, found in Opistophthalmus carinatus (African yellow leg scorpion).